The sequence spans 355 residues: S-adenosylmethionine:tRNA ribosyltransferase-isomerase (355 aa).

The protein belongs to the QueA family. As to quaternary structure, monomer.

The protein localises to the cytoplasm. The enzyme catalyses 7-aminomethyl-7-carbaguanosine(34) in tRNA + S-adenosyl-L-methionine = epoxyqueuosine(34) in tRNA + adenine + L-methionine + 2 H(+). Its pathway is tRNA modification; tRNA-queuosine biosynthesis. Functionally, transfers and isomerizes the ribose moiety from AdoMet to the 7-aminomethyl group of 7-deazaguanine (preQ1-tRNA) to give epoxyqueuosine (oQ-tRNA). This Burkholderia ambifaria (strain MC40-6) protein is S-adenosylmethionine:tRNA ribosyltransferase-isomerase.